The primary structure comprises 93 residues: uncharacterized protein (93 aa).

The region spanning 1-76 (MDSHTTEKRR…IQTIEPDESM (76 aa)) is the Sm domain.

As to quaternary structure, part of the core SMN complex at least composed of smn1, yip11/gem2, gem6, gem7 and gem8. Interacts with gem7; the interaction is direct.

The SMN complex catalyzes the assembly of small nuclear ribonucleoproteins (snRNPs), the building blocks of the spliceosome, and thereby plays an important role in the splicing of cellular pre-mRNAs. Most spliceosomal snRNPs contain a common set of Sm proteins smb1, smd1, smd2, smd3, sme1, smf1 and smg1 that assemble in a heptameric protein ring on the Sm site of the small nuclear RNA to form the core snRNP (Sm core). In the cytosol, the Sm proteins smd1, smd2, sme1, smf1 and smg1 (5Sm) are trapped in an inactive 6S pICln-Sm complex by the chaperone saf5. To complete assembly of core snRNPs, the SMN complex accepts 5Sm from saf5. Binding of snRNA inside 5Sm triggers eviction of the SMN complex, thereby allowing binding of smd3 and smb1 to complete assembly of the core snRNP. This is an uncharacterized protein from Schizosaccharomyces pombe (strain 972 / ATCC 24843) (Fission yeast).